The primary structure comprises 138 residues: MVTTNKNIEEKYIRTVDEVTRNELGKEVNINLVFLSKEKIKKINREFRNINSETDVLTFVYGDDDLFAEIYLCEDVIEENAKKFSNTYEKELLMVLIHAALHCSGYDHEYDKTNAKKMFDLQERYYEKYLKKYGMDNV.

H98, H102, and H108 together coordinate Zn(2+).

The protein belongs to the endoribonuclease YbeY family. Requires Zn(2+) as cofactor.

It localises to the cytoplasm. In terms of biological role, single strand-specific metallo-endoribonuclease involved in late-stage 70S ribosome quality control and in maturation of the 3' terminus of the 16S rRNA. The polypeptide is Endoribonuclease YbeY (Thermosipho melanesiensis (strain DSM 12029 / CIP 104789 / BI429)).